Reading from the N-terminus, the 728-residue chain is Pre-mRNA-splicing ATP-dependent RNA helicase prp-28 (728 aa).

A disordered region spans residues 19 to 155 (KKEEEAAAAK…NDEAELRARY (137 aa)). Composition is skewed to basic and acidic residues over residues 33–59 (PKKE…EEAK), 109–125 (RDYR…DRNQ), and 137–153 (EEKR…ELRA). Residues 293 to 321 (RSWEESTLPRRLLDIVKNVGYDEPTPIQR) carry the Q motif motif. Residues 324–527 (IPIALQARDL…KKYLRRPAIV (204 aa)) enclose the Helicase ATP-binding domain. Residue 337–344 (AVTGSGKT) participates in ATP binding. The DEAD box signature appears at 450 to 453 (DEAD). The Helicase C-terminal domain occupies 538–701 (TVEQRVEFVS…KVPDELRRHE (164 aa)). The interval 692–728 (KVPDELRRHEAAQNKPQKGQKKLEESNGYSGKGGSWN) is disordered. Residues 693 to 703 (VPDELRRHEAA) are compositionally biased toward basic and acidic residues.

It belongs to the DEAD box helicase family. DDX23/PRP28 subfamily. Component of the U5 snRNP complex.

It is found in the cytoplasm. It localises to the nucleus. The enzyme catalyses ATP + H2O = ADP + phosphate + H(+). Functionally, ATP-dependent RNA helicase involved in mRNA splicing. May destabilize the U1/5'-splice site duplex to permit an effective competition for the 5'-splice site by the U6 snRNA, resulting in the switch between U1 and U6 at the 5'-splice site. May also act to unwind the U4/U6 base-pairing interaction in the U4/U6/U5 snRNP, facilitating the first covalent step of splicing. The chain is Pre-mRNA-splicing ATP-dependent RNA helicase prp-28 (prp-28) from Neurospora crassa (strain ATCC 24698 / 74-OR23-1A / CBS 708.71 / DSM 1257 / FGSC 987).